The sequence spans 231 residues: LexA repressor (231 aa).

The segment at residues 26 to 46 (FDEMKDALDLRSKSGIHRLIT) is a DNA-binding region (H-T-H motif). Catalysis depends on for autocatalytic cleavage activity residues Ser152 and Lys190.

It belongs to the peptidase S24 family. In terms of assembly, homodimer.

It carries out the reaction Hydrolysis of Ala-|-Gly bond in repressor LexA.. In terms of biological role, represses a number of genes involved in the response to DNA damage (SOS response), including recA and lexA. In the presence of single-stranded DNA, RecA interacts with LexA causing an autocatalytic cleavage which disrupts the DNA-binding part of LexA, leading to derepression of the SOS regulon and eventually DNA repair. The polypeptide is LexA repressor (Dinoroseobacter shibae (strain DSM 16493 / NCIMB 14021 / DFL 12)).